A 342-amino-acid polypeptide reads, in one-letter code: Holliday junction branch migration complex subunit RuvB (342 aa).

A large ATPase domain (RuvB-L) region spans residues 1–179; sequence MTSILSPEKS…FGIPMRLNFY (179 aa). Residues leucine 18, arginine 19, glycine 60, lysine 63, threonine 64, threonine 65, 126–128, arginine 169, tyrosine 179, and arginine 216 each bind ATP; that span reads EDF. Threonine 64 contacts Mg(2+). Positions 180 to 250 are small ATPAse domain (RuvB-S); it reads NTEELKKVLN…IANFGLNRLE (71 aa). The interval 253-342 is head domain (RuvB-H); the sequence is IIGLDSNDYR…HQFNIFNDNE (90 aa). Residues arginine 289, arginine 308, and arginine 313 each contribute to the DNA site.

This sequence belongs to the RuvB family. As to quaternary structure, homohexamer. Forms an RuvA(8)-RuvB(12)-Holliday junction (HJ) complex. HJ DNA is sandwiched between 2 RuvA tetramers; dsDNA enters through RuvA and exits via RuvB. An RuvB hexamer assembles on each DNA strand where it exits the tetramer. Each RuvB hexamer is contacted by two RuvA subunits (via domain III) on 2 adjacent RuvB subunits; this complex drives branch migration. In the full resolvosome a probable DNA-RuvA(4)-RuvB(12)-RuvC(2) complex forms which resolves the HJ.

It localises to the cytoplasm. The catalysed reaction is ATP + H2O = ADP + phosphate + H(+). Its function is as follows. The RuvA-RuvB-RuvC complex processes Holliday junction (HJ) DNA during genetic recombination and DNA repair, while the RuvA-RuvB complex plays an important role in the rescue of blocked DNA replication forks via replication fork reversal (RFR). RuvA specifically binds to HJ cruciform DNA, conferring on it an open structure. The RuvB hexamer acts as an ATP-dependent pump, pulling dsDNA into and through the RuvAB complex. RuvB forms 2 homohexamers on either side of HJ DNA bound by 1 or 2 RuvA tetramers; 4 subunits per hexamer contact DNA at a time. Coordinated motions by a converter formed by DNA-disengaged RuvB subunits stimulates ATP hydrolysis and nucleotide exchange. Immobilization of the converter enables RuvB to convert the ATP-contained energy into a lever motion, pulling 2 nucleotides of DNA out of the RuvA tetramer per ATP hydrolyzed, thus driving DNA branch migration. The RuvB motors rotate together with the DNA substrate, which together with the progressing nucleotide cycle form the mechanistic basis for DNA recombination by continuous HJ branch migration. Branch migration allows RuvC to scan DNA until it finds its consensus sequence, where it cleaves and resolves cruciform DNA. This chain is Holliday junction branch migration complex subunit RuvB, found in Rickettsia bellii (strain RML369-C).